The chain runs to 442 residues: Chromosomal replication initiator protein DnaA (442 aa).

Positions methionine 1–alanine 84 are domain I, interacts with DnaA modulators. A domain II region spans residues alanine 84–asparagine 105. The segment at asparagine 106 to alanine 322 is domain III, AAA+ region. The ATP site is built by glycine 150, glycine 152, lysine 153, and threonine 154. The tract at residues glutamine 323–asparagine 442 is domain IV, binds dsDNA.

The protein belongs to the DnaA family. As to quaternary structure, oligomerizes as a right-handed, spiral filament on DNA at oriC.

It is found in the cytoplasm. In terms of biological role, plays an essential role in the initiation and regulation of chromosomal replication. ATP-DnaA binds to the origin of replication (oriC) to initiate formation of the DNA replication initiation complex once per cell cycle. Binds the DnaA box (a 9 base pair repeat at the origin) and separates the double-stranded (ds)DNA. Forms a right-handed helical filament on oriC DNA; dsDNA binds to the exterior of the filament while single-stranded (ss)DNA is stabiized in the filament's interior. The ATP-DnaA-oriC complex binds and stabilizes one strand of the AT-rich DNA unwinding element (DUE), permitting loading of DNA polymerase. After initiation quickly degrades to an ADP-DnaA complex that is not apt for DNA replication. Binds acidic phospholipids. This is Chromosomal replication initiator protein DnaA from Methylococcus capsulatus (strain ATCC 33009 / NCIMB 11132 / Bath).